A 471-amino-acid chain; its full sequence is Pneumolysin (471 aa).

The next 4 membrane-spanning stretches (beta stranded) occupy residues 158–171 (MEQLKVKFGSDFEK), 178–187 (IDFNSVHSGE), 256–265 (SDEVEAAFEA), and 273–285 (APQTEWKQILDNT). The Conserved undecapeptide motif lies at 427-437 (ECTGLAWEWWR). A Cholesterol binding motif is present at residues 459-460 (TL).

It belongs to the cholesterol-dependent cytolysin family. As to quaternary structure, elongated monomers align along their lengths, indicating intersubunit contacts and suggesting the prepore structure. Modeling based on cryo-EM shows a homooligomeric pore complex containing 38-44 subunits; when inserted in the host membrane. The size of isolated pores is detergent-dependent; in amphipol A8-35 homogenous rings form with 42 subunits.

It localises to the secreted. The protein resides in the host cell membrane. Its activity is regulated as follows. Erythrocytes hemolysis is inhibited by cholesterol. In terms of biological role, a cholesterol-dependent toxin that causes cytolysis by forming pores in cholesterol-containing host membranes. After binding to target membranes, the protein undergoes a major conformation change, leading to its insertion in the host membrane and formation of an oligomeric pore complex. Cholesterol is required for binding to host membranes, membrane insertion and pore formation; cholesterol binding is mediated by a Thr-Leu pair in the C-terminus. Can be reversibly inactivated by oxidation. The chain is Pneumolysin (ply) from Streptococcus pneumoniae serotype 2 (strain D39 / NCTC 7466).